The chain runs to 133 residues: L-ectoine synthase (133 aa).

The protein belongs to the ectoine synthase family.

It catalyses the reaction (2S)-4-acetamido-2-aminobutanoate = L-ectoine + H2O. It participates in amine and polyamine biosynthesis; ectoine biosynthesis; L-ectoine from L-aspartate 4-semialdehyde: step 3/3. In terms of biological role, catalyzes the circularization of gamma-N-acetyl-alpha,gamma-diaminobutyric acid (ADABA) to ectoine (1,4,5,6-tetrahydro-2-methyl-4-pyrimidine carboxylic acid), which is an excellent osmoprotectant. The protein is L-ectoine synthase of Bordetella petrii (strain ATCC BAA-461 / DSM 12804 / CCUG 43448).